The sequence spans 215 residues: Ribosomal RNA small subunit methyltransferase G (215 aa).

Residues glycine 82, methionine 87, 133–134 (VE), and arginine 148 contribute to the S-adenosyl-L-methionine site.

The protein belongs to the methyltransferase superfamily. RNA methyltransferase RsmG family.

The protein localises to the cytoplasm. It carries out the reaction guanosine(527) in 16S rRNA + S-adenosyl-L-methionine = N(7)-methylguanosine(527) in 16S rRNA + S-adenosyl-L-homocysteine. Specifically methylates the N7 position of guanine in position 527 of 16S rRNA. This chain is Ribosomal RNA small subunit methyltransferase G, found in Stutzerimonas stutzeri (strain A1501) (Pseudomonas stutzeri).